We begin with the raw amino-acid sequence, 547 residues long: Chaperonin GroEL (547 aa).

ATP-binding positions include 30–33 (TLGP), Lys51, 87–91 (DGTTT), Gly415, 479–481 (NAA), and Asp495.

It belongs to the chaperonin (HSP60) family. As to quaternary structure, forms a cylinder of 14 subunits composed of two heptameric rings stacked back-to-back. Interacts with the co-chaperonin GroES.

It is found in the cytoplasm. The catalysed reaction is ATP + H2O + a folded polypeptide = ADP + phosphate + an unfolded polypeptide.. Its function is as follows. Together with its co-chaperonin GroES, plays an essential role in assisting protein folding. The GroEL-GroES system forms a nano-cage that allows encapsulation of the non-native substrate proteins and provides a physical environment optimized to promote and accelerate protein folding. This chain is Chaperonin GroEL, found in Pseudomonas aeruginosa (strain UCBPP-PA14).